We begin with the raw amino-acid sequence, 384 residues long: O-phospho-L-seryl-tRNA:Cys-tRNA synthase 1 (384 aa).

Pyridoxal 5'-phosphate is bound by residues 88-89, Asn195, and 218-220; these read AR and SGH. Lys221 is subject to N6-(pyridoxal phosphate)lysine.

The protein belongs to the SepCysS family. Homodimer. Interacts with SepRS. Pyridoxal 5'-phosphate serves as cofactor.

The catalysed reaction is O-phospho-L-seryl-tRNA(Cys) + hydrogen sulfide + H(+) = L-cysteinyl-tRNA(Cys) + phosphate. Its function is as follows. Converts O-phospho-L-seryl-tRNA(Cys) (Sep-tRNA(Cys)) to L-cysteinyl-tRNA(Cys) (Cys-tRNA(Cys)). This is O-phospho-L-seryl-tRNA:Cys-tRNA synthase 1 from Methanocella arvoryzae (strain DSM 22066 / NBRC 105507 / MRE50).